A 58-amino-acid polypeptide reads, in one-letter code: MSKTLVRKNESLDDALRRFKRSVTKAGTLQELRKREHYEKPSVKRKRKSEAARKRKKY.

Positions glycine 27–tyrosine 58 are disordered. Over residues glutamate 31–serine 42 the composition is skewed to basic and acidic residues. Basic residues predominate over residues valine 43–tyrosine 58.

This sequence belongs to the bacterial ribosomal protein bS21 family.

The sequence is that of Small ribosomal subunit protein bS21 (rpsU) from Lactococcus lactis subsp. lactis (strain IL1403) (Streptococcus lactis).